Consider the following 409-residue polypeptide: Argininosuccinate synthase (409 aa).

ATP is bound by residues 8-16 (AYSGGLDTS) and Ala34. Tyr85 provides a ligand contact to L-citrulline. Gly115 lines the ATP pocket. Residues Thr117, Asn121, and Asp122 each coordinate L-aspartate. Asn121 contacts L-citrulline. Arg125, Ser178, Ser187, Glu268, and Tyr280 together coordinate L-citrulline.

This sequence belongs to the argininosuccinate synthase family. Type 1 subfamily. As to quaternary structure, homotetramer.

The protein localises to the cytoplasm. It carries out the reaction L-citrulline + L-aspartate + ATP = 2-(N(omega)-L-arginino)succinate + AMP + diphosphate + H(+). The protein operates within amino-acid biosynthesis; L-arginine biosynthesis; L-arginine from L-ornithine and carbamoyl phosphate: step 2/3. In Thermotoga maritima (strain ATCC 43589 / DSM 3109 / JCM 10099 / NBRC 100826 / MSB8), this protein is Argininosuccinate synthase.